The following is an 805-amino-acid chain: Rho GTPase-activating protein 42 (805 aa).

The 256-residue stretch at 7–262 folds into the BAR domain; the sequence is EFSDSFLDSP…IRSAEQDFKA (256 aa). Residues 225–262 are a coiled coil; it reads KQQLQFNLQNTRNNFESTRQEVENLMRRIRSAEQDFKA. The PH domain occupies 265–374; sequence QWTMEGFLYV…WMEAMDGKEP (110 aa). In terms of domain architecture, Rho-GAP spans 376 to 572; the sequence is YTLPALLSKK…ILIENYDKIF (197 aa). Disordered regions lie at residues 576-600, 625-725, and 765-805; these read PDPN…RSKA, SDTF…SELL, and VSRS…PGSV. Over residues 626–654 the composition is skewed to low complexity; the sequence is DTFSSSPSSTPMGSMESLSSHSSEQNSCS. The segment covering 670-693 has biased composition (polar residues); that stretch reads LCWTTPSPSTNGPKSPACTTSPDS. A compositionally biased stretch (basic and acidic residues) spans 694 to 704; the sequence is SSKEDANKTDG. The segment covering 710–721 has biased composition (polar residues); that stretch reads LSTSPGDRSSPA. The segment covering 782–793 has biased composition (basic and acidic residues); that stretch reads PPKDGMRFRDDS.

In terms of biological role, may influence blood pressure by functioning as a GTPase-activating protein in vascular smooth muscle. This is Rho GTPase-activating protein 42 from Danio rerio (Zebrafish).